The chain runs to 214 residues: Adenylate kinase (214 aa).

10-15 (GAGKGT) is an ATP binding site. Positions 30 to 59 (STGDIFRANIKGNTPLGQKAKEYMDKGELV) are NMP. AMP contacts are provided by residues T31, R36, 57–59 (ELV), 85–88 (GFPR), and Q92. The LID stretch occupies residues 126–163 (GRRVCTNCGATYNVVFNPTKVEGICDVCNSPVIQRADD). R127 lines the ATP pocket. Zn(2+) contacts are provided by C130 and C133. 136 to 137 (TY) contacts ATP. Positions 150 and 153 each coordinate Zn(2+). 2 residues coordinate AMP: R160 and R171. G199 contributes to the ATP binding site.

Belongs to the adenylate kinase family. In terms of assembly, monomer.

The protein resides in the cytoplasm. It catalyses the reaction AMP + ATP = 2 ADP. It functions in the pathway purine metabolism; AMP biosynthesis via salvage pathway; AMP from ADP: step 1/1. Functionally, catalyzes the reversible transfer of the terminal phosphate group between ATP and AMP. Plays an important role in cellular energy homeostasis and in adenine nucleotide metabolism. The polypeptide is Adenylate kinase (Ruminiclostridium cellulolyticum (strain ATCC 35319 / DSM 5812 / JCM 6584 / H10) (Clostridium cellulolyticum)).